The primary structure comprises 530 residues: Phosphoenolpyruvate carboxykinase (ATP) (530 aa).

Substrate is bound by residues Arg-60, Tyr-195, and Lys-201. ATP contacts are provided by residues Lys-201, His-221, and 237–245 (GLSGTGKTT). Residues Lys-201 and His-221 each contribute to the Mn(2+) site. A Mn(2+)-binding site is contributed by Asp-258. 3 residues coordinate ATP: Glu-286, Arg-324, and Ser-449. Position 324 (Arg-324) interacts with substrate.

This sequence belongs to the phosphoenolpyruvate carboxykinase (ATP) family. The cofactor is Mn(2+).

It is found in the cytoplasm. It carries out the reaction oxaloacetate + ATP = phosphoenolpyruvate + ADP + CO2. Its pathway is carbohydrate biosynthesis; gluconeogenesis. Its function is as follows. Involved in the gluconeogenesis. Catalyzes the conversion of oxaloacetate (OAA) to phosphoenolpyruvate (PEP) through direct phosphoryl transfer between the nucleoside triphosphate and OAA. This is Phosphoenolpyruvate carboxykinase (ATP) from Geobacter metallireducens (strain ATCC 53774 / DSM 7210 / GS-15).